We begin with the raw amino-acid sequence, 300 residues long: tRNA pseudouridine synthase A (300 aa).

The active-site Nucleophile is the aspartate 67. Tyrosine 125 serves as a coordination point for substrate.

It belongs to the tRNA pseudouridine synthase TruA family. As to quaternary structure, homodimer.

The catalysed reaction is uridine(38/39/40) in tRNA = pseudouridine(38/39/40) in tRNA. Formation of pseudouridine at positions 38, 39 and 40 in the anticodon stem and loop of transfer RNAs. In Synechococcus sp. (strain CC9902), this protein is tRNA pseudouridine synthase A.